We begin with the raw amino-acid sequence, 220 residues long: tRNA (guanine-N(7)-)-methyltransferase (220 aa).

Glu-46, Asp-71, Asp-100, and Asp-122 together coordinate S-adenosyl-L-methionine. Asp-122 is an active-site residue. Residues Lys-126, Asp-158, and 196 to 199 contribute to the substrate site; that span reads TEYE.

The protein belongs to the class I-like SAM-binding methyltransferase superfamily. TrmB family.

The catalysed reaction is guanosine(46) in tRNA + S-adenosyl-L-methionine = N(7)-methylguanosine(46) in tRNA + S-adenosyl-L-homocysteine. It participates in tRNA modification; N(7)-methylguanine-tRNA biosynthesis. Its function is as follows. Catalyzes the formation of N(7)-methylguanine at position 46 (m7G46) in tRNA. The sequence is that of tRNA (guanine-N(7)-)-methyltransferase from Malacoplasma penetrans (strain HF-2) (Mycoplasma penetrans).